Consider the following 155-residue polypeptide: Small ribosomal subunit protein uS7 (155 aa).

It belongs to the universal ribosomal protein uS7 family. As to quaternary structure, part of the 30S ribosomal subunit. Contacts proteins S9 and S11.

One of the primary rRNA binding proteins, it binds directly to 16S rRNA where it nucleates assembly of the head domain of the 30S subunit. Is located at the subunit interface close to the decoding center, probably blocks exit of the E-site tRNA. This chain is Small ribosomal subunit protein uS7, found in Chlorobium luteolum (strain DSM 273 / BCRC 81028 / 2530) (Pelodictyon luteolum).